Here is a 522-residue protein sequence, read N- to C-terminus: Protein nucleotidyltransferase YdiU (522 aa).

Residues glycine 109, glycine 111, arginine 112, lysine 132, aspartate 144, glycine 145, arginine 195, and arginine 202 each contribute to the ATP site. Aspartate 271 acts as the Proton acceptor in catalysis. Asparagine 272 and aspartate 281 together coordinate Mg(2+). Aspartate 281 is an ATP binding site.

This sequence belongs to the SELO family. Requires Mg(2+) as cofactor. Mn(2+) is required as a cofactor.

It carries out the reaction L-seryl-[protein] + ATP = 3-O-(5'-adenylyl)-L-seryl-[protein] + diphosphate. It catalyses the reaction L-threonyl-[protein] + ATP = 3-O-(5'-adenylyl)-L-threonyl-[protein] + diphosphate. The catalysed reaction is L-tyrosyl-[protein] + ATP = O-(5'-adenylyl)-L-tyrosyl-[protein] + diphosphate. The enzyme catalyses L-histidyl-[protein] + UTP = N(tele)-(5'-uridylyl)-L-histidyl-[protein] + diphosphate. It carries out the reaction L-seryl-[protein] + UTP = O-(5'-uridylyl)-L-seryl-[protein] + diphosphate. It catalyses the reaction L-tyrosyl-[protein] + UTP = O-(5'-uridylyl)-L-tyrosyl-[protein] + diphosphate. Nucleotidyltransferase involved in the post-translational modification of proteins. It can catalyze the addition of adenosine monophosphate (AMP) or uridine monophosphate (UMP) to a protein, resulting in modifications known as AMPylation and UMPylation. This Burkholderia ambifaria (strain ATCC BAA-244 / DSM 16087 / CCUG 44356 / LMG 19182 / AMMD) (Burkholderia cepacia (strain AMMD)) protein is Protein nucleotidyltransferase YdiU.